A 130-amino-acid polypeptide reads, in one-letter code: MAKPTRGGQKKKVRRNVPSGVAHIQSTFNNTIVTIADTVGDVISWASAGSSGFKGAKKGTPFAAQQAAESAGRRAIDSGMRQCEVMVSGPGAGRETAIRALQAVGLEITLIRDVTPIPHNGCRPPKRRRV.

Belongs to the universal ribosomal protein uS11 family. As to quaternary structure, part of the 30S ribosomal subunit. Interacts with proteins S7 and S18. Binds to IF-3.

In terms of biological role, located on the platform of the 30S subunit, it bridges several disparate RNA helices of the 16S rRNA. Forms part of the Shine-Dalgarno cleft in the 70S ribosome. In Gloeobacter violaceus (strain ATCC 29082 / PCC 7421), this protein is Small ribosomal subunit protein uS11.